A 309-amino-acid chain; its full sequence is WD repeat domain phosphoinositide-interacting protein 4 (309 aa).

Residues Gln-4 to His-42 form a WD 1 repeat. The L/FRRG motif signature appears at Leu-180–Gly-183. One copy of the WD 2 repeat lies at Thr-184–Arg-223.

Belongs to the WD repeat PROPPIN family. In terms of assembly, interacts with WIPI1. Interacts with WIPI2. Interacts with ATG2A and ATG2B. Interacts with ULK1. May interact with the PRKAA1, PRKAA2, PRKAB1 and PRKAG1 subunits of the AMPK kinase. May interact with NUDC.

The protein localises to the preautophagosomal structure. It is found in the cytoplasm. Component of the autophagy machinery that controls the major intracellular degradation process by which cytoplasmic materials are packaged into autophagosomes and delivered to lysosomes for degradation. Binds phosphatidylinositol 3-phosphate (PtdIns3P). Activated by the STK11/AMPK signaling pathway upon starvation, WDR45 is involved in autophagosome assembly downstream of WIPI2, regulating the size of forming autophagosomes. Together with WIPI1, promotes ATG2 (ATG2A or ATG2B)-mediated lipid transfer by enhancing ATG2-association with phosphatidylinositol 3-monophosphate (PI3P)-containing membranes. Probably recruited to membranes through its PtdIns3P activity. The protein is WD repeat domain phosphoinositide-interacting protein 4 (Wdr45) of Rattus norvegicus (Rat).